Reading from the N-terminus, the 373-residue chain is 3-isopropylmalate dehydrogenase (373 aa).

82–93 is an NAD(+) binding site; it reads GPKWGTGTVRPE. Substrate-binding residues include Arg-100, Arg-110, Arg-139, and Asp-231. Mg(2+) is bound by residues Asp-231, Asp-256, and Asp-260. An NAD(+)-binding site is contributed by 295–306; it reads GSAPDLPANKVN.

This sequence belongs to the isocitrate and isopropylmalate dehydrogenases family. In terms of assembly, homodimer. Mg(2+) serves as cofactor. The cofactor is Mn(2+).

The protein resides in the cytoplasm. The catalysed reaction is (2R,3S)-3-isopropylmalate + NAD(+) = 4-methyl-2-oxopentanoate + CO2 + NADH. It functions in the pathway amino-acid biosynthesis; L-leucine biosynthesis; L-leucine from 3-methyl-2-oxobutanoate: step 3/4. Its function is as follows. Catalyzes the oxidation of 3-carboxy-2-hydroxy-4-methylpentanoate (3-isopropylmalate) to 3-carboxy-4-methyl-2-oxopentanoate. The product decarboxylates to 4-methyl-2 oxopentanoate. This Candida albicans (Yeast) protein is 3-isopropylmalate dehydrogenase (LEU2).